A 434-amino-acid polypeptide reads, in one-letter code: Neuropeptide receptor 22 (434 aa).

Topologically, residues methionine 1 to leucine 55 are extracellular. Residues phenylalanine 56 to valine 76 form a helical membrane-spanning segment. Over tyrosine 77–asparagine 86 the chain is Cytoplasmic. The chain crosses the membrane as a helical span at residues isoleucine 87–serine 107. Residues tyrosine 108–leucine 128 lie on the Extracellular side of the membrane. Cysteine 126 and cysteine 204 are oxidised to a cystine. The helical transmembrane segment at leucine 129–phenylalanine 149 threads the bilayer. Over aspartate 150–arginine 169 the chain is Cytoplasmic. A helical membrane pass occupies residues alanine 170–phenylalanine 190. The Extracellular segment spans residues threonine 191–valine 226. Residue asparagine 207 is glycosylated (N-linked (GlcNAc...) asparagine). Residues leucine 227–isoleucine 247 form a helical membrane-spanning segment. The Cytoplasmic segment spans residues lysine 248–valine 277. The helical transmembrane segment at proline 278–isoleucine 298 threads the bilayer. Residues asparagine 299–serine 310 are Extracellular-facing. Residues tryptophan 311–valine 331 form a helical membrane-spanning segment. The Cytoplasmic portion of the chain corresponds to asparagine 332–alanine 434.

This sequence belongs to the G-protein coupled receptor 1 family. Expressed in many cells, mainly in the head region, with expression detected in the head muscles, I2 neurons, MC neurons, RIH neuron, AIA neurons, AUA neurons, ASK neurons, ASI neurons, a few B-type motorneurons in the posterior ventral nerve cord, pharyngeal muscles, body wall muscles, the intestine and a few classes of unidentified cells anterior to the nerve ring. Expression in the MC neurons is important to mediate suppression of feeding while expression in the RIH neuron is important for the facilitation of egg-laying. No expression detected in other tissues including hypodermis.

It is found in the cell membrane. Functionally, receptor for the LURY-1-1 and LURY-1-2 peptides which control food-related processes including feeding, lifespan, egg-laying and roaming behavior. Receptor for flp-7 which stimulates serotonin-induced fat loss. Serotonin induces secretion of flp-7 from neurons and binding to npr-22 which leads to induction of the atgp-1 lipase and subsequent fat loss. Acts in vitro as a receptor for the flp-7 FMRFamide-like neuropeptides TPMQRSSMVRF-amide, SPMQRSSMVRF-amide, SPMERSAMVRF-amide and SPMDRSKMVRF-amide. Also acts in vitro as a receptor for a number of other FMRFamide-like neuropeptides including the flp-1 neuropeptide PNFMRY-amide, the flp-9 neuropeptide KPSFVRF-amide, the flp-11 neuropeptides AMRNALVRF-amide, ASGGMRNALVRF-amide and NGAPQPFVRF-amide, the flp-13 neuropeptides AADGAPLIRF-amide, ASPSAPLIRF-amide, SPSAVPLIRF-amide, SAAAPLIRF-amide and ASSAPLIRF-amide, and the flp-22 neuropeptide SPSAKWMRF-amide. The SPMERSAMVRF-amide neuropeptide from flp-7 acts as the strongest in vitro activator of npr-22. In Caenorhabditis elegans, this protein is Neuropeptide receptor 22.